Reading from the N-terminus, the 232-residue chain is 2,3,4,5-tetrahydropyridine-2,6-dicarboxylate N-acetyltransferase (232 aa).

It belongs to the transferase hexapeptide repeat family. DapH subfamily.

It carries out the reaction (S)-2,3,4,5-tetrahydrodipicolinate + acetyl-CoA + H2O = L-2-acetamido-6-oxoheptanedioate + CoA. It functions in the pathway amino-acid biosynthesis; L-lysine biosynthesis via DAP pathway; LL-2,6-diaminopimelate from (S)-tetrahydrodipicolinate (acetylase route): step 1/3. Functionally, catalyzes the transfer of an acetyl group from acetyl-CoA to tetrahydrodipicolinate. This is 2,3,4,5-tetrahydropyridine-2,6-dicarboxylate N-acetyltransferase from Streptococcus uberis (strain ATCC BAA-854 / 0140J).